Reading from the N-terminus, the 239-residue chain is Uridylate kinase (239 aa).

Residue 13-16 (KVSG) participates in ATP binding. G55 is a binding site for UMP. The ATP site is built by G56 and R60. Residues D75 and 136–143 (TGNPFFTT) contribute to the UMP site. ATP-binding residues include T163, Q164, Y169, and D172.

The protein belongs to the UMP kinase family. In terms of assembly, homohexamer.

It is found in the cytoplasm. It catalyses the reaction UMP + ATP = UDP + ADP. It functions in the pathway pyrimidine metabolism; CTP biosynthesis via de novo pathway; UDP from UMP (UMPK route): step 1/1. Its activity is regulated as follows. Inhibited by UTP. In terms of biological role, catalyzes the reversible phosphorylation of UMP to UDP. The chain is Uridylate kinase from Bartonella bacilliformis (strain ATCC 35685 / KC583 / Herrer 020/F12,63).